The sequence spans 174 residues: Ly6/PLAUR domain-containing protein 6 (174 aa).

Positions 1–22 are cleaved as a signal peptide; sequence MEPWPLMAWGLMLTAITGWIKA. The UPAR/Ly6 domain maps to 47–141; sequence FKCFTCEDAP…PRNETDAIFS (95 aa). 6 disulfides stabilise this stretch: Cys49-Cys77, Cys52-Cys61, Cys70-Cys96, Cys102-Cys121, Cys107-Cys118, and Cys122-Cys127. 2 N-linked (GlcNAc...) asparagine glycosylation sites follow: Asn134 and Asn147. Ser149 is lipidated: GPI-anchor amidated serine. The propeptide at 150–174 is removed in mature form; the sequence is AQSTQTLPLLLLSVSITSLMLHSIN.

In terms of assembly, interacts with fzd8 and lrp6.

It localises to the cell membrane. It is found in the membrane raft. Its function is as follows. Acts as an important regulator of embryogenesis through its enhancement of Wnt/beta-catenin signaling. Positively regulates Wnt/beta-catenin signaling by ensuring phosphorylation of lrp6 specifically in plasma membrane rafts and its subsequent internalization into signaling-competent vesicles. Essential for the wnt8-mediated patterning of the mesoderm and neuroectoderm during gastrulation. This chain is Ly6/PLAUR domain-containing protein 6 (lypd6), found in Danio rerio (Zebrafish).